Reading from the N-terminus, the 862-residue chain is DNA mismatch repair protein MutS (862 aa).

608–615 provides a ligand contact to ATP; it reads GPNMAGKS.

It belongs to the DNA mismatch repair MutS family.

This protein is involved in the repair of mismatches in DNA. It is possible that it carries out the mismatch recognition step. This protein has a weak ATPase activity. The polypeptide is DNA mismatch repair protein MutS (Borreliella afzelii (strain PKo) (Borrelia afzelii)).